The sequence spans 1387 residues: Collagen-like protein 6 (1387 aa).

N-linked (GlcNAc...) asparagine; by host glycosylation occurs at Asn6. 6 consecutive Collagen-like domains span residues Gly95–Ile154, Gly161–Asn220, Gly266–Met325, Gly344–Lys403, Ile450–Ile508, and Gly512–Ser751. Disordered regions lie at residues Gly98–Asp219, Lys268–Gly422, and Lys454–Gln753. Composition is skewed to basic and acidic residues over residues Ile114–Lys181, Ser189–Lys199, Ser207–Asp219, Lys268–Lys340, Lys364–Asn382, Ser390–Glu405, Lys454–Ile535, and Lys544–Glu747. N-linked (GlcNAc...) asparagine; by host glycans are attached at residues Asn794, Asn814, Asn819, Asn826, Asn846, Asn886, Asn894, Asn969, Asn1032, Asn1077, Asn1123, Asn1200, Asn1224, Asn1232, and Asn1233.

May be hydroxylated on lysine by the viral-encoded procollagen-lysine,2-oxoglutarate 5-dioxygenase.

The protein localises to the virion. In terms of biological role, may participate in the formation of a layer of cross-linked glycosylated fibrils at the viral surface thus giving it a hairy-like appearance. The sequence is that of Collagen-like protein 6 from Acanthamoeba polyphaga mimivirus (APMV).